The chain runs to 278 residues: Ribosomal RNA small subunit methyltransferase A (278 aa).

The S-adenosyl-L-methionine site is built by asparagine 18, leucine 20, glycine 45, glutamate 66, aspartate 89, and asparagine 110.

This sequence belongs to the class I-like SAM-binding methyltransferase superfamily. rRNA adenine N(6)-methyltransferase family. RsmA subfamily.

It is found in the cytoplasm. It catalyses the reaction adenosine(1518)/adenosine(1519) in 16S rRNA + 4 S-adenosyl-L-methionine = N(6)-dimethyladenosine(1518)/N(6)-dimethyladenosine(1519) in 16S rRNA + 4 S-adenosyl-L-homocysteine + 4 H(+). Specifically dimethylates two adjacent adenosines (A1518 and A1519) in the loop of a conserved hairpin near the 3'-end of 16S rRNA in the 30S particle. May play a critical role in biogenesis of 30S subunits. This Cupriavidus pinatubonensis (strain JMP 134 / LMG 1197) (Cupriavidus necator (strain JMP 134)) protein is Ribosomal RNA small subunit methyltransferase A.